The chain runs to 371 residues: Glycosyltransferase 8 domain-containing protein 1 (371 aa).

Topologically, residues 1–7 (MSFRKVN) are cytoplasmic. The helical; Signal-anchor for type II membrane protein transmembrane segment at 8–28 (IIIWVLAVVLFLLVLHHNFLS) threads the bilayer. Topologically, residues 29–371 (LSSLLKNDIS…RRHMDTSNIK (343 aa)) are lumenal. A glycan (N-linked (GlcNAc...) asparagine) is linked at Asn257.

Belongs to the glycosyltransferase 8 family.

The protein resides in the membrane. The protein is Glycosyltransferase 8 domain-containing protein 1 (Glt8d1) of Mus musculus (Mouse).